Consider the following 686-residue polypeptide: X-linked interleukin-1 receptor accessory protein-like 2 (686 aa).

An N-terminal signal peptide occupies residues 1 to 16; that stretch reads MKPPFLLALVVCSVVS. Residues 17–354 are Extracellular-facing; sequence TNLKMVSKRN…LLRKKDLIYK (338 aa). The Ig-like C2-type 1 domain maps to 18–132; sequence NLKMVSKRNS…YCMKVSMSLT (115 aa). Cys-53 and Cys-116 are oxidised to a cystine. N-linked (GlcNAc...) asparagine glycosylation is found at Asn-63, Asn-120, Asn-136, Asn-211, and Asn-328. 2 consecutive Ig-like C2-type domains span residues 141–232 and 239–347; these read CYNS…LKVT and PPKP…VLLR. 2 disulfide bridges follow: Cys-162–Cys-214 and Cys-265–Cys-331. Residues 355–375 form a helical membrane-spanning segment; sequence IELAGGLGAIFLLLVLLVVIY. The Cytoplasmic segment spans residues 376 to 686; that stretch reads KCYNIELMLF…KELSFTSDIW (311 aa). In terms of domain architecture, TIR spans 400-556; the sequence is KEYDAYLSYT…KFWKHLVYEM (157 aa). Glu-488 is a catalytic residue.

Belongs to the interleukin-1 receptor family. Detected at low levels in fetal and adult brain, in particular in the frontal lobe, temporal lobe and cerebellum. Detected at very low levels in skin, liver, fetal ovary and in placenta.

It is found in the membrane. It carries out the reaction NAD(+) + H2O = ADP-D-ribose + nicotinamide + H(+). This chain is X-linked interleukin-1 receptor accessory protein-like 2 (IL1RAPL2), found in Homo sapiens (Human).